The chain runs to 353 residues: Cytochrome c biogenesis protein CcsA (353 aa).

8 helical membrane passes run 15–35, 37–57, 68–88, 97–117, 142–162, 261–281, 288–308, and 322–342; these read FAILFLTMLVYWGGAAFPNLP, LAALGTAGMAIANLCMATLLG, LSNLYESLFFLTWGITTVHLI, LVGVVTAPVAMLIAAFATMTL, VMMLSYSALMVGALLAIAFLI, IIGLGFPLLTIGIIAGGVWAN, WSWDPKETWALITWLVFAAYL, and AILAATGFVVVWICYLGVNLL.

This sequence belongs to the CcmF/CycK/Ccl1/NrfE/CcsA family. In terms of assembly, may interact with ccs1.

The protein localises to the cellular thylakoid membrane. In terms of biological role, required during biogenesis of c-type cytochromes (cytochrome c6 and cytochrome f) at the step of heme attachment. The sequence is that of Cytochrome c biogenesis protein CcsA from Nostoc punctiforme (strain ATCC 29133 / PCC 73102).